Here is a 160-residue protein sequence, read N- to C-terminus: GFLDKVIKVCGRDLVRIKIDICGKILLGDMTTGQEKQRILGSGQSAEIMPSSINKEVDSLNMLESIANLPEELRAMLPEKQPSSPQLQQYVPALKNSNVAVKELNKIIRGRQEEAEDNSHSLLKDFNLNIYSPKKRQLDMTVSEKCCQVGCTRRFIANSC.

Disulfide bonds link cysteine 10–cysteine 147, cysteine 22–cysteine 160, and cysteine 146–cysteine 151. Positions 34 to 133 (QEKQRILGSG…KDFNLNIYSP (100 aa)) are cleaved as a propeptide — connecting peptide.

The protein belongs to the insulin family. Heterodimer of a B chain and an A chain linked by two disulfide bonds. In terms of tissue distribution, expressed in the endometrium during pregnancy and in mammary gland during lactation.

It localises to the secreted. Its function is as follows. Relaxin is an ovarian hormone that acts with estrogen to produce dilatation of the birth canal in many mammals. It bears mature young, and allows separation of the pelvic bones. The polypeptide is Prorelaxin (RLN) (Cavia porcellus (Guinea pig)).